The sequence spans 348 residues: Dihydroorotase (348 aa).

Positions 17 and 19 each coordinate Zn(2+). Residues 19–21 (HLR) and asparagine 45 each bind substrate. Residues lysine 103, histidine 140, and histidine 178 each contribute to the Zn(2+) site. Lysine 103 bears the N6-carboxylysine mark. Histidine 140 serves as a coordination point for substrate. Leucine 223 contacts substrate. Aspartate 251 provides a ligand contact to Zn(2+). Aspartate 251 is a catalytic residue. Histidine 255 and alanine 267 together coordinate substrate.

It belongs to the metallo-dependent hydrolases superfamily. DHOase family. Class II DHOase subfamily. Homodimer. Requires Zn(2+) as cofactor.

It carries out the reaction (S)-dihydroorotate + H2O = N-carbamoyl-L-aspartate + H(+). It participates in pyrimidine metabolism; UMP biosynthesis via de novo pathway; (S)-dihydroorotate from bicarbonate: step 3/3. Functionally, catalyzes the reversible cyclization of carbamoyl aspartate to dihydroorotate. In Serratia proteamaculans (strain 568), this protein is Dihydroorotase.